The sequence spans 206 residues: MNVLHIDSGILGEHSVSRRLTAAIVAQIKADRPDANVIYRDLVSERLQHLTGAQIMAPADLDGVDPALASDVRTGRQMLDEFLAADTIVVGAPMYNFSIPSQLKAWIDRLAVAGKTFRYTEAGPEGLAKGKKVIVASTRGGHYSAGPAAAMDHQEAYLRTVFGFFGITDVEFVRAEGLNLGADQKQFAIAEAEKTIAEGDVLRLAS.

FMN contacts are provided by residues 15-17, 94-97, and 138-141; these read SVS, MYNF, and TRGG.

The protein belongs to the azoreductase type 1 family. As to quaternary structure, homodimer. FMN serves as cofactor.

It carries out the reaction 2 a quinone + NADH + H(+) = 2 a 1,4-benzosemiquinone + NAD(+). It catalyses the reaction N,N-dimethyl-1,4-phenylenediamine + anthranilate + 2 NAD(+) = 2-(4-dimethylaminophenyl)diazenylbenzoate + 2 NADH + 2 H(+). Its function is as follows. Quinone reductase that provides resistance to thiol-specific stress caused by electrophilic quinones. In terms of biological role, also exhibits azoreductase activity. Catalyzes the reductive cleavage of the azo bond in aromatic azo compounds to the corresponding amines. The polypeptide is FMN-dependent NADH:quinone oxidoreductase (Sinorhizobium fredii (strain NBRC 101917 / NGR234)).